A 406-amino-acid chain; its full sequence is Cysteine desulfurase (406 aa).

Lys-226 is modified (N6-(pyridoxal phosphate)lysine). The active-site Cysteine persulfide intermediate is the Cys-364.

It belongs to the class-V pyridoxal-phosphate-dependent aminotransferase family. Csd subfamily. As to quaternary structure, homodimer. Interacts with SufE and the SufBCD complex composed of SufB, SufC and SufD. The interaction with SufE is required to mediate the direct transfer of the sulfur atom from the S-sulfanylcysteine. Pyridoxal 5'-phosphate serves as cofactor.

It is found in the cytoplasm. It catalyses the reaction (sulfur carrier)-H + L-cysteine = (sulfur carrier)-SH + L-alanine. It carries out the reaction L-selenocysteine + AH2 = hydrogenselenide + L-alanine + A + H(+). The protein operates within cofactor biosynthesis; iron-sulfur cluster biosynthesis. Cysteine desulfurases mobilize the sulfur from L-cysteine to yield L-alanine, an essential step in sulfur metabolism for biosynthesis of a variety of sulfur-containing biomolecules. Component of the suf operon, which is activated and required under specific conditions such as oxidative stress and iron limitation. Acts as a potent selenocysteine lyase in vitro, that mobilizes selenium from L-selenocysteine. Selenocysteine lyase activity is however unsure in vivo. The polypeptide is Cysteine desulfurase (Yersinia pestis bv. Antiqua (strain Angola)).